Consider the following 315-residue polypeptide: Ribosomal protein L11 methyltransferase (315 aa).

S-adenosyl-L-methionine-binding residues include T164, G185, D207, and N249.

Belongs to the methyltransferase superfamily. PrmA family.

It is found in the cytoplasm. It catalyses the reaction L-lysyl-[protein] + 3 S-adenosyl-L-methionine = N(6),N(6),N(6)-trimethyl-L-lysyl-[protein] + 3 S-adenosyl-L-homocysteine + 3 H(+). Methylates ribosomal protein L11. This chain is Ribosomal protein L11 methyltransferase, found in Lactobacillus gasseri (strain ATCC 33323 / DSM 20243 / BCRC 14619 / CIP 102991 / JCM 1131 / KCTC 3163 / NCIMB 11718 / NCTC 13722 / AM63).